A 362-amino-acid polypeptide reads, in one-letter code: Aminomethyltransferase (362 aa).

The protein belongs to the GcvT family. The glycine cleavage system is composed of four proteins: P, T, L and H.

The catalysed reaction is N(6)-[(R)-S(8)-aminomethyldihydrolipoyl]-L-lysyl-[protein] + (6S)-5,6,7,8-tetrahydrofolate = N(6)-[(R)-dihydrolipoyl]-L-lysyl-[protein] + (6R)-5,10-methylene-5,6,7,8-tetrahydrofolate + NH4(+). The glycine cleavage system catalyzes the degradation of glycine. In Porphyromonas gingivalis (strain ATCC 33277 / DSM 20709 / CIP 103683 / JCM 12257 / NCTC 11834 / 2561), this protein is Aminomethyltransferase.